A 488-amino-acid polypeptide reads, in one-letter code: Glutamate--tRNA ligase (488 aa).

The 'HIGH' region motif lies at 9–19; the sequence is PSPTGFLHIGG. The Zn(2+) site is built by Cys-112, Cys-114, Cys-139, and His-141. Residues 256–260 carry the 'KMSKS' region motif; sequence KLSKR. Position 259 (Lys-259) interacts with ATP.

Belongs to the class-I aminoacyl-tRNA synthetase family. Glutamate--tRNA ligase type 1 subfamily. As to quaternary structure, monomer. It depends on Zn(2+) as a cofactor.

It localises to the cytoplasm. The enzyme catalyses tRNA(Glu) + L-glutamate + ATP = L-glutamyl-tRNA(Glu) + AMP + diphosphate. Its function is as follows. Catalyzes the attachment of glutamate to tRNA(Glu) in a two-step reaction: glutamate is first activated by ATP to form Glu-AMP and then transferred to the acceptor end of tRNA(Glu). The protein is Glutamate--tRNA ligase of Elusimicrobium minutum (strain Pei191).